The sequence spans 186 residues: uncharacterized protein (186 aa).

The segment at Thr121–Glu146 is disordered.

Belongs to the chlamydial CPn_0422/CT_273/TC_0545 family.

This is an uncharacterized protein from Chlamydia muridarum (strain MoPn / Nigg).